The primary structure comprises 262 residues: Tryptophan synthase alpha chain (262 aa).

Catalysis depends on proton acceptor residues glutamate 49 and aspartate 60.

It belongs to the TrpA family. Tetramer of two alpha and two beta chains.

It carries out the reaction (1S,2R)-1-C-(indol-3-yl)glycerol 3-phosphate + L-serine = D-glyceraldehyde 3-phosphate + L-tryptophan + H2O. Its pathway is amino-acid biosynthesis; L-tryptophan biosynthesis; L-tryptophan from chorismate: step 5/5. The alpha subunit is responsible for the aldol cleavage of indoleglycerol phosphate to indole and glyceraldehyde 3-phosphate. The protein is Tryptophan synthase alpha chain of Caldanaerobacter subterraneus subsp. tengcongensis (strain DSM 15242 / JCM 11007 / NBRC 100824 / MB4) (Thermoanaerobacter tengcongensis).